A 486-amino-acid chain; its full sequence is Maintenance of mitochondrial morphology protein 1 (486 aa).

At 1 to 20 (MNFQQSAIPPFSFLLSFTQG) the chain is on the lumenal side. A helical membrane pass occupies residues 21-41 (FLLGQLSVVLLIGAFIKFFIF). Residues 42–486 (GEAPPPPSRG…GSLPDGAVGN (445 aa)) lie on the Cytoplasmic side of the membrane. 3 disordered regions span residues 70–96 (TNEAGSRSLREKPSTSNVLRPVPSSST), 271–320 (TPPL…SPKS), and 387–486 (RTGV…AVGN). Polar residues predominate over residues 83-96 (STSNVLRPVPSSST). One can recognise an SMP-LTD domain in the interval 128–379 (QPESLDWFNV…EPRVQVVGLP (252 aa)). Residues 271 to 282 (TPPLHTPSPSPA) are compositionally biased toward pro residues. Residues 292-306 (QSQPENNSSNPNQQS) are compositionally biased toward low complexity. Polar residues-rich tracts occupy residues 398 to 407 (TGSNAASRSA) and 440 to 450 (DSVSRSSSFNV). Residues 460–474 (MTREDSRGAISDDFH) are compositionally biased toward basic and acidic residues.

This sequence belongs to the MMM1 family. Homodimer. Component of the ER-mitochondria encounter structure (ERMES) or MDM complex, composed of mmm1, mdm10, mdm12 and mdm34. A mmm1 homodimer associates with one molecule of mdm12 on each side in a pairwise head-to-tail manner, and the SMP-LTD domains of mmm1 and mdm12 generate a continuous hydrophobic tunnel for phospholipid trafficking.

It is found in the endoplasmic reticulum membrane. In terms of biological role, component of the ERMES/MDM complex, which serves as a molecular tether to connect the endoplasmic reticulum (ER) and mitochondria. Components of this complex are involved in the control of mitochondrial shape and protein biogenesis, and function in nonvesicular lipid trafficking between the ER and mitochondria. The mdm12-mmm1 subcomplex functions in the major beta-barrel assembly pathway that is responsible for biogenesis of all outer membrane beta-barrel proteins, and acts in a late step after the SAM complex. The mdm10-mdm12-mmm1 subcomplex further acts in the TOM40-specific pathway after the action of the mdm12-mmm1 complex. Essential for establishing and maintaining the structure of mitochondria and maintenance of mtDNA nucleoids. In Aspergillus terreus (strain NIH 2624 / FGSC A1156), this protein is Maintenance of mitochondrial morphology protein 1.